The chain runs to 128 residues: Sulfurtransferase TusD (128 aa).

Cysteine 78 functions as the Cysteine persulfide intermediate in the catalytic mechanism.

It belongs to the DsrE/TusD family. As to quaternary structure, heterohexamer, formed by a dimer of trimers. The hexameric TusBCD complex contains 2 copies each of TusB, TusC and TusD. The TusBCD complex interacts with TusE.

The protein localises to the cytoplasm. Its function is as follows. Part of a sulfur-relay system required for 2-thiolation of 5-methylaminomethyl-2-thiouridine (mnm(5)s(2)U) at tRNA wobble positions. Accepts sulfur from TusA and transfers it in turn to TusE. The chain is Sulfurtransferase TusD from Escherichia coli O157:H7.